A 397-amino-acid polypeptide reads, in one-letter code: Tryptophan synthase beta chain (397 aa).

K87 carries the N6-(pyridoxal phosphate)lysine modification.

The protein belongs to the TrpB family. Tetramer of two alpha and two beta chains. Pyridoxal 5'-phosphate is required as a cofactor.

The enzyme catalyses (1S,2R)-1-C-(indol-3-yl)glycerol 3-phosphate + L-serine = D-glyceraldehyde 3-phosphate + L-tryptophan + H2O. The protein operates within amino-acid biosynthesis; L-tryptophan biosynthesis; L-tryptophan from chorismate: step 5/5. Its function is as follows. The beta subunit is responsible for the synthesis of L-tryptophan from indole and L-serine. This is Tryptophan synthase beta chain from Klebsiella pneumoniae (strain 342).